The sequence spans 130 residues: UPF0251 protein MmarC5_0986 (130 aa).

It belongs to the UPF0251 family.

The chain is UPF0251 protein MmarC5_0986 from Methanococcus maripaludis (strain C5 / ATCC BAA-1333).